The following is a 27-amino-acid chain: Potassium channel toxin alpha-KTx 9.11 (27 aa).

Cystine bridges form between cysteine 3–cysteine 19, cysteine 6–cysteine 23, and cysteine 10–cysteine 25.

This sequence belongs to the short scorpion toxin superfamily. Potassium channel inhibitor family. Alpha-KTx 09 subfamily. In terms of tissue distribution, expressed by the venom gland.

The protein resides in the secreted. Functionally, may play a role in blocking voltage-gated potassium channels Kv1.2/KCNA2, Kv1.3/KCNA3 and Kv1.6/KCNA6 to a lesser extent. This chain is Potassium channel toxin alpha-KTx 9.11, found in Mesobuthus gibbosus (Mediterranean checkered scorpion).